Here is a 148-residue protein sequence, read N- to C-terminus: Thiol-disulfide oxidoreductase YkuV (148 aa).

The 144-residue stretch at Lys-2 to Ala-145 folds into the Thioredoxin domain. A disulfide bond links Cys-41 and Cys-44.

Monomer.

The protein localises to the cytoplasm. Its function is as follows. Participates in various redox reactions through the reversible oxidation of its active center dithiol to a disulfide and catalyzes dithiol-disulfide exchange reactions. This Bacillus subtilis (strain 168) protein is Thiol-disulfide oxidoreductase YkuV (ykuV).